We begin with the raw amino-acid sequence, 147 residues long: MSIVQNKKAFHDYFIEEKHEAGAVLEGWEVKAIRAGRAQLKEAYVIIRNGELFLIGCHVSPLLAASTHIQPDPVRTRKLLLHAEEIKRLIGKVERAGYTLVPLDIHYKKGRIKLEIGLAKGKKQHDKRESEKQKEWERDKQRLMRPK.

Residues 119–147 (AKGKKQHDKRESEKQKEWERDKQRLMRPK) are disordered. Residues 126–147 (DKRESEKQKEWERDKQRLMRPK) are compositionally biased toward basic and acidic residues.

This sequence belongs to the SmpB family.

It localises to the cytoplasm. Functionally, required for rescue of stalled ribosomes mediated by trans-translation. Binds to transfer-messenger RNA (tmRNA), required for stable association of tmRNA with ribosomes. tmRNA and SmpB together mimic tRNA shape, replacing the anticodon stem-loop with SmpB. tmRNA is encoded by the ssrA gene; the 2 termini fold to resemble tRNA(Ala) and it encodes a 'tag peptide', a short internal open reading frame. During trans-translation Ala-aminoacylated tmRNA acts like a tRNA, entering the A-site of stalled ribosomes, displacing the stalled mRNA. The ribosome then switches to translate the ORF on the tmRNA; the nascent peptide is terminated with the 'tag peptide' encoded by the tmRNA and targeted for degradation. The ribosome is freed to recommence translation, which seems to be the essential function of trans-translation. The chain is SsrA-binding protein from Nitrosospira multiformis (strain ATCC 25196 / NCIMB 11849 / C 71).